The primary structure comprises 259 residues: Thiazole synthase (259 aa).

Lysine 95 acts as the Schiff-base intermediate with DXP in catalysis. Residues glycine 156, 183 to 184 (AG), and 205 to 206 (NS) contribute to the 1-deoxy-D-xylulose 5-phosphate site.

The protein belongs to the ThiG family. As to quaternary structure, homotetramer. Forms heterodimers with either ThiH or ThiS.

It localises to the cytoplasm. It carries out the reaction [ThiS sulfur-carrier protein]-C-terminal-Gly-aminoethanethioate + 2-iminoacetate + 1-deoxy-D-xylulose 5-phosphate = [ThiS sulfur-carrier protein]-C-terminal Gly-Gly + 2-[(2R,5Z)-2-carboxy-4-methylthiazol-5(2H)-ylidene]ethyl phosphate + 2 H2O + H(+). Its pathway is cofactor biosynthesis; thiamine diphosphate biosynthesis. Catalyzes the rearrangement of 1-deoxy-D-xylulose 5-phosphate (DXP) to produce the thiazole phosphate moiety of thiamine. Sulfur is provided by the thiocarboxylate moiety of the carrier protein ThiS. In vitro, sulfur can be provided by H(2)S. This chain is Thiazole synthase, found in Coxiella burnetii (strain RSA 331 / Henzerling II).